The chain runs to 273 residues: 4-hydroxy-tetrahydrodipicolinate reductase (273 aa).

NAD(+)-binding positions include Gly-12–Met-17 and Glu-38. Arg-39 contacts NADP(+). NAD(+)-binding positions include Gly-102–Thr-104 and Ala-126–Phe-129. The active-site Proton donor/acceptor is His-159. His-160 provides a ligand contact to (S)-2,3,4,5-tetrahydrodipicolinate. The active-site Proton donor is Lys-163. Gly-169–Thr-170 contributes to the (S)-2,3,4,5-tetrahydrodipicolinate binding site.

It belongs to the DapB family. Homotetramer.

It is found in the cytoplasm. The enzyme catalyses (S)-2,3,4,5-tetrahydrodipicolinate + NAD(+) + H2O = (2S,4S)-4-hydroxy-2,3,4,5-tetrahydrodipicolinate + NADH + H(+). It carries out the reaction (S)-2,3,4,5-tetrahydrodipicolinate + NADP(+) + H2O = (2S,4S)-4-hydroxy-2,3,4,5-tetrahydrodipicolinate + NADPH + H(+). It functions in the pathway amino-acid biosynthesis; L-lysine biosynthesis via DAP pathway; (S)-tetrahydrodipicolinate from L-aspartate: step 4/4. Functionally, catalyzes the conversion of 4-hydroxy-tetrahydrodipicolinate (HTPA) to tetrahydrodipicolinate. This is 4-hydroxy-tetrahydrodipicolinate reductase from Salmonella paratyphi A (strain ATCC 9150 / SARB42).